Reading from the N-terminus, the 260-residue chain is CD320 antigen (260 aa).

The N-terminal stretch at 1-28 is a signal peptide; the sequence is MARGGAGRAVALGLVLRLLFGLRTGLEA. Residues 29–208 are Extracellular-facing; that stretch reads APAPAHTRVQ…DSSRNPSAYG (180 aa). An LDL-receptor class A 1 domain is found at 46–83; that stretch reads SCPTDTFQCLTSGYCVPLSWRCDGDQDCSDGSDEEDCR. Intrachain disulfides connect Cys47/Cys60, Cys54/Cys73, and Cys67/Cys82. Ca(2+) contacts are provided by Trp65, Asp68, Asp70, Asp72, Asp78, and Glu79. N-linked (GlcNAc...) asparagine glycosylation occurs at Asn118. The LDL-receptor class A 2 domain occupies 123-160; it reads PCQESELHCILDDVCIPHTWRCDGHPDCLDSSDELSCD. Disulfide bonds link Cys124-Cys137, Cys131-Cys150, and Cys144-Cys159. Trp142, Asp145, His147, Asp149, Asp155, and Glu156 together coordinate Ca(2+). An N-linked (GlcNAc...) asparagine glycan is attached at Asn185. Residues 209–229 form a helical membrane-spanning segment; that stretch reads VIAAAGVLSAILVSATLLILL. Over 230–260 the chain is Cytoplasmic; sequence RLRGQGYLPPPGLLVAVKESLLLSERKTSLI.

As to quaternary structure, interacts (via LDL-receptor class A domains) with TCN2.

It localises to the cell membrane. Functionally, receptor for transcobalamin saturated with cobalamin (TCbl). Plays an important role in cobalamin uptake. Plasma membrane protein that is expressed on follicular dendritic cells (FDC) and mediates interaction with germinal center B cells. Functions as a costimulator to promote B cell responses to antigenic stimuli; promotes B cell differentiation and proliferation. Germinal center-B (GC-B) cells differentiate into memory B-cells and plasma cells (PC) through interaction with T-cells and follicular dendritic cells (FDC). CD320 augments the proliferation of PC precursors generated by IL-10. This chain is CD320 antigen (Cd320), found in Mus musculus (Mouse).